Consider the following 156-residue polypeptide: MRTLRILAVGRIRTPFWQQAATHYMERIRHNCRLTETVVKDGGAALPPTARNADEGARLIAAMGPTDIVVCLDEHGRNMTSRDFAGFIERLTENATRTPCFVIGGAFGLDKSVLQRAEHKLALGPMTFPHEMARVVLLEQLYRADAILRGAPYHHD.

Residues Leu72, Gly104, and Leu123–Phe128 each bind S-adenosyl-L-methionine.

This sequence belongs to the RNA methyltransferase RlmH family. As to quaternary structure, homodimer.

The protein localises to the cytoplasm. It carries out the reaction pseudouridine(1915) in 23S rRNA + S-adenosyl-L-methionine = N(3)-methylpseudouridine(1915) in 23S rRNA + S-adenosyl-L-homocysteine + H(+). Functionally, specifically methylates the pseudouridine at position 1915 (m3Psi1915) in 23S rRNA. The protein is Ribosomal RNA large subunit methyltransferase H of Nitratidesulfovibrio vulgaris (strain ATCC 29579 / DSM 644 / CCUG 34227 / NCIMB 8303 / VKM B-1760 / Hildenborough) (Desulfovibrio vulgaris).